The chain runs to 292 residues: MSKVKVSIEGSQETLWKIFHAEVNEMIVTKNGRKLFPKLEYIVEGLDENKLYAIMLQLQPVGESRFKFSGGKWQETGKAEKQVDAKKMWHADGVRKGSDWMWSSICFDRVKISNYSESNNASMIYLNSMHKYIPVLTIYESPSESPFCVPQSSNQIVATAKFPHTEFIAVTAYQNQKITDLKIKHNSFAKGFRDGNLSRKRRSPSYSDGSNSQSPSPKSRSPPEVAPLQSMPPINPFLFYFPHMLSENLPVQFPFAFPFLSPLPSTPSSSSSELSIVKEEDQEVEEDIDIVG.

Residues 10–194 constitute a DNA-binding region (T-box); sequence GSQETLWKIF…HNSFAKGFRD (185 aa). 2 disordered regions span residues 192 to 227 and 265 to 292; these read FRDG…EVAP and STPS…DIVG. Low complexity-rich tracts occupy residues 204–223 and 265–275; these read PSYS…RSPP and STPSSSSSELS. Residues 280–292 are compositionally biased toward acidic residues; it reads EDQEVEEDIDIVG.

It localises to the nucleus. Its function is as follows. Transcription factor. Involved in the control of early morphogenesis of the intestine, hypodermis and body-wall muscle. Involved in regulating expression of vab-7. Appears to have partially redundant function to tbx-8. Positively modulates expression of homeobox protein lin-39, perhaps by binding to regulatory regions of the lin-39 gene, acting in the vulval lineage. In Caenorhabditis elegans, this protein is T-box transcription factor tbx-9 (tbx-9).